The following is a 186-amino-acid chain: Peptidyl-tRNA hydrolase (186 aa).

Y14 is a tRNA binding site. Catalysis depends on H19, which acts as the Proton acceptor. The tRNA site is built by Y61, N63, and N107.

It belongs to the PTH family. In terms of assembly, monomer.

Its subcellular location is the cytoplasm. The catalysed reaction is an N-acyl-L-alpha-aminoacyl-tRNA + H2O = an N-acyl-L-amino acid + a tRNA + H(+). Hydrolyzes ribosome-free peptidyl-tRNAs (with 1 or more amino acids incorporated), which drop off the ribosome during protein synthesis, or as a result of ribosome stalling. Functionally, catalyzes the release of premature peptidyl moieties from peptidyl-tRNA molecules trapped in stalled 50S ribosomal subunits, and thus maintains levels of free tRNAs and 50S ribosomes. This Helicobacter acinonychis (strain Sheeba) protein is Peptidyl-tRNA hydrolase.